Consider the following 284-residue polypeptide: MEMO1 family protein YN1551_0739 (284 aa).

It belongs to the MEMO1 family.

This Saccharolobus islandicus (strain Y.N.15.51 / Yellowstone #2) (Sulfolobus islandicus) protein is MEMO1 family protein YN1551_0739.